A 139-amino-acid polypeptide reads, in one-letter code: Trafficking protein particle complex subunit 2-like protein (139 aa).

It belongs to the TRAPP small subunits family. Sedlin subfamily. In terms of assembly, component of the multisubunit TRAPP (transport protein particle) complex, which includes at least TRAPPC2, TRAPPC2L, TRAPPC3, TRAPPC3L, TRAPPC4, TRAPPC5, TRAPPC8, TRAPPC9, TRAPPC10, TRAPPC11 and TRAPPC12. Interacts with the heterodimer TRAPPC3-TRAPPC6A.

The protein resides in the cytoplasm. It localises to the perinuclear region. Its subcellular location is the endoplasmic reticulum. It is found in the golgi apparatus. Functionally, may play a role in vesicular transport from endoplasmic reticulum to Golgi. In Rattus norvegicus (Rat), this protein is Trafficking protein particle complex subunit 2-like protein (Trappc2l).